Here is a 359-residue protein sequence, read N- to C-terminus: N-acetyl-gamma-glutamyl-phosphate reductase (359 aa).

The active site involves cysteine 162.

Belongs to the NAGSA dehydrogenase family. Type 1 subfamily.

The protein resides in the cytoplasm. The enzyme catalyses N-acetyl-L-glutamate 5-semialdehyde + phosphate + NADP(+) = N-acetyl-L-glutamyl 5-phosphate + NADPH + H(+). Its pathway is amino-acid biosynthesis; L-arginine biosynthesis; N(2)-acetyl-L-ornithine from L-glutamate: step 3/4. Catalyzes the NADPH-dependent reduction of N-acetyl-5-glutamyl phosphate to yield N-acetyl-L-glutamate 5-semialdehyde. In Prochlorococcus marinus (strain SARG / CCMP1375 / SS120), this protein is N-acetyl-gamma-glutamyl-phosphate reductase.